A 230-amino-acid polypeptide reads, in one-letter code: Ribose-5-phosphate isomerase A (230 aa).

Substrate-binding positions include 31–34, 88–91, and 101–104; these read TGST, DGSD, and KGGG. Glu-110 functions as the Proton acceptor in the catalytic mechanism. A substrate-binding site is contributed by Lys-128.

This sequence belongs to the ribose 5-phosphate isomerase family. As to quaternary structure, homodimer.

The enzyme catalyses aldehydo-D-ribose 5-phosphate = D-ribulose 5-phosphate. The protein operates within carbohydrate degradation; pentose phosphate pathway; D-ribose 5-phosphate from D-ribulose 5-phosphate (non-oxidative stage): step 1/1. In terms of biological role, catalyzes the reversible conversion of ribose-5-phosphate to ribulose 5-phosphate. In Lactobacillus acidophilus (strain ATCC 700396 / NCK56 / N2 / NCFM), this protein is Ribose-5-phosphate isomerase A.